We begin with the raw amino-acid sequence, 894 residues long: Translation initiation factor IF-2 (894 aa).

Positions 25–304 (ADAGMNKASS…KPTSMQHGFD (280 aa)) are disordered. Basic and acidic residues-rich tracts occupy residues 33-44 (SSDHVSDEEKQK), 52-62 (EHGDKSGESEP), 101-174 (STIE…KEMN), 184-239 (AKKE…ENSD), and 247-263 (YAREAEDAADRKEEGGA). The span at 283–293 (RGGKGRNKGKL) shows a compositional bias: basic residues. In terms of domain architecture, tr-type G spans 393–562 (PRAPVVTIMG…LLQSEVLELT (170 aa)). The tract at residues 402 to 409 (GHVDHGKT) is G1. A GTP-binding site is contributed by 402-409 (GHVDHGKT). Positions 427 to 431 (GITQH) are G2. The interval 448–451 (DTPG) is G3. GTP-binding positions include 448 to 452 (DTPGH) and 502 to 505 (NKID). Residues 502 to 505 (NKID) are G4. The segment at 538 to 540 (SAK) is G5.

The protein belongs to the TRAFAC class translation factor GTPase superfamily. Classic translation factor GTPase family. IF-2 subfamily.

Its subcellular location is the cytoplasm. In terms of biological role, one of the essential components for the initiation of protein synthesis. Protects formylmethionyl-tRNA from spontaneous hydrolysis and promotes its binding to the 30S ribosomal subunits. Also involved in the hydrolysis of GTP during the formation of the 70S ribosomal complex. This chain is Translation initiation factor IF-2, found in Vibrio campbellii (strain ATCC BAA-1116).